Consider the following 398-residue polypeptide: Mitogen-activated protein kinase 1 (398 aa).

The tract at residues 1–26 (MDAGAQPPDTEMAEAGGGQQPPAAAA) is disordered. In terms of domain architecture, Protein kinase spans 67–352 (KPPILPIGKG…VEGALAHPYL (286 aa)). ATP-binding positions include 73–81 (IGKGAYGIV) and K96. D193 serves as the catalytic Proton acceptor. Position 225 is a phosphothreonine (T225). A TXY motif is present at residues 225–227 (TEY). A Phosphotyrosine modification is found at Y227.

This sequence belongs to the protein kinase superfamily. CMGC Ser/Thr protein kinase family. MAP kinase subfamily. In terms of assembly, may interact with RAC1. Post-translationally, dually phosphorylated on Thr-225 and Tyr-227, which activates the enzyme.

It catalyses the reaction L-seryl-[protein] + ATP = O-phospho-L-seryl-[protein] + ADP + H(+). It carries out the reaction L-threonyl-[protein] + ATP = O-phospho-L-threonyl-[protein] + ADP + H(+). Its activity is regulated as follows. Activated by threonine and tyrosine phosphorylation. Activated in response to sphingolipid elicitor (SE). Involved in sphingolipid elicitor (SE)-dependent defense signaling pathway. Acts downstream of heterotrimeric G protein alpha subunit and small GTPase RAC1. May regulate the expression of various genes involved in biotic and abiotic stress response. Involved in an abscisic acid signaling pathway that regulates the activities of antioxidant enzymes and the production of hydrogen peroxide. Acts downstream of CCAMK. The protein is Mitogen-activated protein kinase 1 (MPK1) of Oryza sativa subsp. japonica (Rice).